The chain runs to 316 residues: Probable 5-dehydro-4-deoxyglucarate dehydratase (316 aa).

The protein belongs to the DapA family.

It catalyses the reaction 5-dehydro-4-deoxy-D-glucarate + H(+) = 2,5-dioxopentanoate + CO2 + H2O. Its pathway is carbohydrate acid metabolism; D-glucarate degradation; 2,5-dioxopentanoate from D-glucarate: step 2/2. The sequence is that of Probable 5-dehydro-4-deoxyglucarate dehydratase from Corynebacterium glutamicum (strain ATCC 13032 / DSM 20300 / JCM 1318 / BCRC 11384 / CCUG 27702 / LMG 3730 / NBRC 12168 / NCIMB 10025 / NRRL B-2784 / 534).